A 125-amino-acid polypeptide reads, in one-letter code: MAISKDDILEAVGSMTVMELNDLVKAFEEKFGVSAAALAVAAPGAGGAAAPAAEEKTEFDVILTAAGEKKVEVIKVVRAATGLGLKEAKDVVDGAPKAVKEGIAKADAEALKKQLEDAGAKVEIK.

It belongs to the bacterial ribosomal protein bL12 family. Homodimer. Part of the ribosomal stalk of the 50S ribosomal subunit. Forms a multimeric L10(L12)X complex, where L10 forms an elongated spine to which 2 to 4 L12 dimers bind in a sequential fashion. Binds GTP-bound translation factors.

Forms part of the ribosomal stalk which helps the ribosome interact with GTP-bound translation factors. Is thus essential for accurate translation. In Azoarcus sp. (strain BH72), this protein is Large ribosomal subunit protein bL12.